The following is a 73-amino-acid chain: Large ribosomal subunit protein bL32c (73 aa).

The protein belongs to the bacterial ribosomal protein bL32 family.

Its subcellular location is the plastid. The protein resides in the chloroplast. In Jasminum nudiflorum (Winter jasmine), this protein is Large ribosomal subunit protein bL32c.